A 101-amino-acid chain; its full sequence is MAKKSAIEKNNRRKKMTKNAAPKRARLKAIIADKSKPMEERFAATLKLAEMPRNSSATRIRNRCDLTGRPRSVYRLNKLSRIAIRDLGSRGLVPGLVKSSW.

The segment covering 1–10 (MAKKSAIEKN) has biased composition (basic and acidic residues). The interval 1–23 (MAKKSAIEKNNRRKKMTKNAAPK) is disordered. A compositionally biased stretch (basic residues) spans 11–23 (NRRKKMTKNAAPK).

It belongs to the universal ribosomal protein uS14 family. In terms of assembly, part of the 30S ribosomal subunit. Contacts proteins S3 and S10.

Binds 16S rRNA, required for the assembly of 30S particles and may also be responsible for determining the conformation of the 16S rRNA at the A site. The polypeptide is Small ribosomal subunit protein uS14 (Rhodopseudomonas palustris (strain TIE-1)).